Reading from the N-terminus, the 398-residue chain is S-adenosylmethionine synthase (398 aa).

136–141 contacts ATP; it reads GTGSSD.

The protein belongs to the AdoMet synthase 2 family. It depends on Mg(2+) as a cofactor.

The catalysed reaction is L-methionine + ATP + H2O = S-adenosyl-L-methionine + phosphate + diphosphate. The protein operates within amino-acid biosynthesis; S-adenosyl-L-methionine biosynthesis; S-adenosyl-L-methionine from L-methionine: step 1/1. Functionally, catalyzes the formation of S-adenosylmethionine from methionine and ATP. The polypeptide is S-adenosylmethionine synthase (Methanosarcina barkeri (strain Fusaro / DSM 804)).